The following is a 414-amino-acid chain: tRNA dimethylallyltransferase (414 aa).

33-40 (APTASGKT) is an ATP binding site. A substrate-binding site is contributed by 35 to 40 (TASGKT). Interaction with substrate tRNA regions lie at residues 58–61 (DSAL), 182–186 (QRITR), and 266–271 (RCVGYR).

This sequence belongs to the IPP transferase family. In terms of assembly, monomer. It depends on Mg(2+) as a cofactor.

It catalyses the reaction adenosine(37) in tRNA + dimethylallyl diphosphate = N(6)-dimethylallyladenosine(37) in tRNA + diphosphate. Catalyzes the transfer of a dimethylallyl group onto the adenine at position 37 in tRNAs that read codons beginning with uridine, leading to the formation of N6-(dimethylallyl)adenosine (i(6)A). This Psychrobacter cryohalolentis (strain ATCC BAA-1226 / DSM 17306 / VKM B-2378 / K5) protein is tRNA dimethylallyltransferase.